The following is a 976-amino-acid chain: DNA-directed RNA polymerase 1, mitochondrial (976 aa).

The transit peptide at 1-42 (MWRNILGRASLRKVKFLSDSSSSGTHYPVNRVRGILSSVNLS) directs the protein to the mitochondrion. Active-site residues include aspartate 677, lysine 752, and aspartate 909.

It belongs to the phage and mitochondrial RNA polymerase family.

It localises to the mitochondrion. The catalysed reaction is RNA(n) + a ribonucleoside 5'-triphosphate = RNA(n+1) + diphosphate. In terms of biological role, DNA-dependent RNA polymerase catalyzes the transcription of DNA into RNA using the four ribonucleoside triphosphates as substrates. This is DNA-directed RNA polymerase 1, mitochondrial (RPOT1) from Arabidopsis thaliana (Mouse-ear cress).